Reading from the N-terminus, the 61-residue chain is Small ribosomal subunit protein uS14 (61 aa).

Residues cysteine 24, cysteine 27, cysteine 40, and cysteine 43 each contribute to the Zn(2+) site.

Belongs to the universal ribosomal protein uS14 family. Zinc-binding uS14 subfamily. As to quaternary structure, part of the 30S ribosomal subunit. Contacts proteins S3 and S10. It depends on Zn(2+) as a cofactor.

Binds 16S rRNA, required for the assembly of 30S particles and may also be responsible for determining the conformation of the 16S rRNA at the A site. In Mesoplasma florum (strain ATCC 33453 / NBRC 100688 / NCTC 11704 / L1) (Acholeplasma florum), this protein is Small ribosomal subunit protein uS14.